Consider the following 191-residue polypeptide: Peptidyl-tRNA hydrolase (191 aa).

Residue Tyr14 participates in tRNA binding. Catalysis depends on His19, which acts as the Proton acceptor. Tyr64, Asn66, and Asn112 together coordinate tRNA.

This sequence belongs to the PTH family. Monomer.

It localises to the cytoplasm. It carries out the reaction an N-acyl-L-alpha-aminoacyl-tRNA + H2O = an N-acyl-L-amino acid + a tRNA + H(+). Hydrolyzes ribosome-free peptidyl-tRNAs (with 1 or more amino acids incorporated), which drop off the ribosome during protein synthesis, or as a result of ribosome stalling. In terms of biological role, catalyzes the release of premature peptidyl moieties from peptidyl-tRNA molecules trapped in stalled 50S ribosomal subunits, and thus maintains levels of free tRNAs and 50S ribosomes. The protein is Peptidyl-tRNA hydrolase of Syntrophotalea carbinolica (strain DSM 2380 / NBRC 103641 / GraBd1) (Pelobacter carbinolicus).